A 451-amino-acid polypeptide reads, in one-letter code: UPF0210 protein CLH_1879 (451 aa).

Belongs to the UPF0210 family. In terms of assembly, homodimer.

The polypeptide is UPF0210 protein CLH_1879 (Clostridium botulinum (strain Alaska E43 / Type E3)).